A 71-amino-acid polypeptide reads, in one-letter code: Mitochondrial import protein 1 (71 aa).

Residues 22–44 (YAAINLGLPFLNGVMLGFGEIFA) form a helical membrane-spanning segment.

It belongs to the MIM1 family. As to quaternary structure, component of the mitochondrial outer import machinery (MIM) complex containing at least mim1 and mim2. Interacts with mim2. Interacts with mitophagy receptor atg43.

The protein resides in the mitochondrion outer membrane. Component of the mitochondrial outer import machinery (MIM) complex that mediates transport of proteins into mitochondrial compartments. Promotes the insertion of tom70 into the outer mitochondrial membrane. Promotes the insertion of atg43 into the outer mitochondrial membrane. The MIM complex cooperates with the receptor tom70 in binding of precursor proteins and promotes their insertion and assembly into the outer membrane. Involved in import of the subset of proteins with multiple alpha-helical transmembrane segments. Required for the assembly of the TOM (translocase of outer membrane) receptor complex, which is responsible for the recognition and translocation of cytosolically synthesized mitochondrial preproteins. The polypeptide is Mitochondrial import protein 1 (Schizosaccharomyces pombe (strain 972 / ATCC 24843) (Fission yeast)).